Reading from the N-terminus, the 63-residue chain is Large ribosomal subunit protein bL32 (63 aa).

Over residues M1 to R16 the composition is skewed to basic residues. The interval M1–I22 is disordered.

This sequence belongs to the bacterial ribosomal protein bL32 family.

This is Large ribosomal subunit protein bL32 from Beijerinckia indica subsp. indica (strain ATCC 9039 / DSM 1715 / NCIMB 8712).